A 469-amino-acid chain; its full sequence is uncharacterized protein (469 aa).

The N-terminal stretch at 1-19 is a signal peptide; the sequence is MRINFVLLITLILPWFVSG. A run of 7 helical transmembrane segments spans residues 199-219, 236-256, 283-303, 305-325, 338-358, 386-406, and 413-433; these read IKST…TWLL, AFWV…MVAI, AYTS…PALV, YYVY…FAPL, ILLK…PFFA, IALA…RPLL, and GFQL…AFLF.

The protein localises to the membrane. This is an uncharacterized protein from Schizosaccharomyces pombe (strain 972 / ATCC 24843) (Fission yeast).